A 530-amino-acid chain; its full sequence is Histone-arginine methyltransferase CARMER (530 aa).

The SAM-dependent MTase PRMT-type domain maps to 141–450; it reads ASQYFQFYGY…QSYDVTIDLH (310 aa). S-adenosyl-L-methionine-binding residues include Gln154, Arg163, Gly187, Glu209, Glu238, and Thr266. Residue Arg501 is modified to Asymmetric dimethylarginine; by autocatalysis.

The protein belongs to the class I-like SAM-binding methyltransferase superfamily. Protein arginine N-methyltransferase family. As to quaternary structure, homodimer. In terms of processing, the dimethylated protein is the major form.

The protein resides in the cytoplasm. It is found in the nucleus. It carries out the reaction L-arginyl-[protein] + 2 S-adenosyl-L-methionine = N(omega),N(omega)-dimethyl-L-arginyl-[protein] + 2 S-adenosyl-L-homocysteine + 2 H(+). Methylates (mono- and asymmetric dimethylation) the guanidino nitrogens of arginyl residues in proteins. May methylate histone H3 at 'Arg-17' and activate transcription via chromatin remodeling. The polypeptide is Histone-arginine methyltransferase CARMER (Art4) (Drosophila yakuba (Fruit fly)).